We begin with the raw amino-acid sequence, 1422 residues long: Guanine nucleotide exchange factor subunit RIC1 (1422 aa).

WD repeat units follow at residues 64-103 and 304-343; these read TQFGSYKQAEWRPDSTMIAVSTANGYILFFHITSSRGDKY and NKTGAVKLIRWSPDNSAVIVTWEYGGLSLWSVFGAQLICT. Disordered stretches follow at residues 442-462 and 986-1005; these read NPKYSSARAERMPRHEKSPFA and SGESETPPSTPTSQEPSSSG. The segment covering 449-460 has biased composition (basic and acidic residues); that stretch reads RAERMPRHEKSP. Residues Thr-991 and Thr-995 each carry the phosphothreonine modification. Residues Ser-1014, Ser-1016, Ser-1018, Ser-1036, and Ser-1171 each carry the phosphoserine modification. Residues 1021-1048 form a disordered region; that stretch reads AENVPPGKFGLQKTLSMPTGPSGKRWSK. Disordered stretches follow at residues 1179–1198 and 1355–1422; these read THRDTDRASSPGPQMQDAFL and DTFQ…CSVS. Positions 1378-1396 are enriched in polar residues; that stretch reads GSCSHGSISQSEPGSNNVV. Residues 1403 to 1412 show a composition bias toward acidic residues; the sequence is TTQADEEEPL.

The protein belongs to the RIC1 family. As to quaternary structure, forms a complex with RGP1; the interaction enhances RAB6A GTPase activity. Interacts (via central domain) with RGP1. Interacts with RAB6A; the interaction is direct with a preference for RAB6A-GDP. Interacts (via C-terminus domain) with RAB33B; the interaction is direct with a preference for RAB33B-GTP. Interacts with GJA1. Expressed in the eye lens.

Its subcellular location is the cytoplasm. The protein resides in the cytosol. It localises to the membrane. The RIC1-RGP1 complex acts as a guanine nucleotide exchange factor (GEF), which activates RAB6A by exchanging bound GDP for free GTP, and may thereby be required for efficient fusion of endosome-derived vesicles with the Golgi compartment. The RIC1-RGP1 complex participates in the recycling of mannose-6-phosphate receptors. Required for phosphorylation and localization of GJA1. Is a regulator of procollagen transport and secretion, and is required for correct cartilage morphogenesis and development of the craniofacial skeleton. The chain is Guanine nucleotide exchange factor subunit RIC1 from Mus musculus (Mouse).